The chain runs to 87 residues: Acyl-CoA-binding protein (87 aa).

Ser2 is subject to N-acetylserine. One can recognise an ACB domain in the interval 2-87 (SQAEFDKAAE…VEDLKKKYGI (86 aa)). Lys8 is subject to N6-acetyllysine; alternate. Position 8 is an N6-succinyllysine; alternate (Lys8). Lys14 contacts an acyl-CoA. The residue at position 17 (Lys17) is an N6-succinyllysine. Lys19 is subject to N6-acetyllysine. Phosphotyrosine is present on Tyr29. Residues 29 to 33 (YSHYK), Lys55, and Tyr74 contribute to the an acyl-CoA site. An N6-acetyllysine; alternate modification is found at Lys55. Lys55 carries the N6-succinyllysine; alternate modification. An N6-(2-hydroxyisobutyryl)lysine; alternate modification is found at Lys55. Lys55 is modified (N6-malonyllysine; alternate). Lys77 is modified (N6-acetyllysine; alternate). Lys77 bears the N6-succinyllysine; alternate mark.

Belongs to the ACBP family. In terms of assembly, monomer.

Its subcellular location is the endoplasmic reticulum. The protein localises to the golgi apparatus. In terms of biological role, binds medium- and long-chain acyl-CoA esters with very high affinity and may function as an intracellular carrier of acyl-CoA esters. This Canis lupus familiaris (Dog) protein is Acyl-CoA-binding protein (DBI).